A 109-amino-acid polypeptide reads, in one-letter code: MAASELLKSRVENLRDYELVVILTTDTPKEKVEAILEGISKTIAEKDGSFTEVNHWGKRKLAYLIGRYGEGYYVFIKMKAKPSSIRKINADLRISEQVIRHMAINMDEE.

The protein belongs to the bacterial ribosomal protein bS6 family.

Binds together with bS18 to 16S ribosomal RNA. The protein is Small ribosomal subunit protein bS6 of Dehalococcoides mccartyi (strain ATCC BAA-2266 / KCTC 15142 / 195) (Dehalococcoides ethenogenes (strain 195)).